The primary structure comprises 1029 residues: MGTKVSDDLVSTVRSVVGSDYSDMDIIRALHMANHDPTAAINIIFDTPSFAKPDVATPTPSGSNGGKRVDSGLKGCTFGDSGSVGANHRVEEENESVNGGGEESVSGNEWWFVGCSELAGLSTCKGRKLKSGDELVFTFPHSKGLKPETTPGKRGFGRGRPALRGASDIVRFSTKDSGEIGRIPNEWARCLLPLVRDKKIRIEGSCKSAPEALSIMDTILLSVSVYINSSMFQKHSATSFKTASNTAEESMFHPLPNLFRLLGLIPFKKAEFTPEDFYSKKRPLSSKDGSAIPTSLLQLNKVKNMNQDANGDENEQCISDGDLDNIVGVGDSSGLKEMETPHTLLCELRPYQKQALHWMTQLEKGNCTDEAATMLHPCWEAYCLADKRELVVYLNSFTGDATIHFPSTLQMARGGILADAMGLGKTVMTISLLLAHSWKAASTGFLCPNYEGDKVISSSVDDLTSPPVKATKFLGFDKRLLEQKSVLQNGGNLIVCPMTLLGQWKTEIEMHAKPGSLSVYVHYGQSRPKDAKLLSQSDVVITTYGVLTSEFSQENSADHEGIYAVRWFRIVLDEAHTIKNSKSQISLAAAALVADRRWCLTGTPIQNNLEDLYSLLRFLRIEPWGTWAWWNKLVQKPFEEGDERGLKLVQSILKPIMLRRTKSSTDREGRPILVLPPADARVIYCELSESERDFYDALFKRSKVKFDQFVEQGKVLHNYASILELLLRLRQCCDHPFLVMSRGDTAEYSDLNKLSKRFLSGKSSGLEREGKDVPSEAFVQEVVEELRKGEQGECPICLEALEDAVLTPCAHRLCRECLLASWRNSTSGLCPVCRNTVSKQELITAPTESRFQVDVEKNWVESSKITALLEELEGLRSSGSKSILFSQWTAFLDLLQIPLSRNNFSFVRLDGTLSQQQREKVLKEFSEDGSILVLLMSLKAGGVGINLTAASNAFVMDPWWNPAVEEQAVMRIHRIGQTKEVKIRRFIVKGTVEERMEAVQARKQRMISGALTDQEVRSARIEELKMLFT.

Residues 83–104 form a disordered region; that stretch reads SVGANHRVEEENESVNGGGEES. Residues 406-622 enclose the Helicase ATP-binding domain; it reads PSTLQMARGG…YSLLRFLRIE (217 aa). Residue 419 to 426 participates in ATP binding; the sequence is DAMGLGKT. The DEAH box motif lies at 573-576; that stretch reads DEAH. The segment at 794–834 adopts an RING-type zinc-finger fold; the sequence is CPICLEALEDAVLTPCAHRLCRECLLASWRNSTSGLCPVCR. The Helicase C-terminal domain maps to 864–1029; sequence KITALLEELE…RIEELKMLFT (166 aa).

The protein belongs to the SNF2/RAD54 helicase family. RAD16 subfamily.

The protein localises to the nucleus. Functionally, functions in error-free postreplication DNA repair or DNA-damage tolerance (DTT) pathway. Required for homologous recombination (HR) induced by DNA double-strand break (DSB) in somatic cells. Required for damage-induced DNA repair, independently of MUS81 and RECQL4A. Plays a role in synthesis-dependent strand annealing (SDSA) but not in single-strand annealing (SSA). Possesses double-stranded DNA-dependent ATPase activity. Is able to regress replication forks with preference for forks with a leading strand gap. Is able to catalyze branch migration of Holliday junctions and is unaffected by protein blockades. In Arabidopsis thaliana (Mouse-ear cress), this protein is DNA repair protein RAD5A.